We begin with the raw amino-acid sequence, 360 residues long: Photosystem II protein D1 (360 aa).

The next 3 helical transmembrane spans lie at 29-46 (YIGW…SAIS), 118-133 (HFFI…EWEL), and 142-156 (WICV…AAAA). Residue histidine 118 participates in chlorophyll a binding. Residue tyrosine 126 coordinates pheophytin a. Positions 170 and 189 each coordinate [CaMn4O5] cluster. Residues 197–218 (FHMLGVAGVFGGSLFSAMHGSL) traverse the membrane as a helical segment. Histidine 198 contacts chlorophyll a. A quinone contacts are provided by residues histidine 215 and 264–265 (SF). A Fe cation-binding site is contributed by histidine 215. Histidine 272 lines the Fe cation pocket. Residues 274-288 (FLGAWPVVGIWFTAM) form a helical membrane-spanning segment. 4 residues coordinate [CaMn4O5] cluster: histidine 332, glutamate 333, aspartate 342, and alanine 344. Positions 345–360 (AGESLPVALVAPAVAA) are excised as a propeptide.

The protein belongs to the reaction center PufL/M/PsbA/D family. In terms of assembly, PSII is composed of 1 copy each of membrane proteins PsbA, PsbB, PsbC, PsbD, PsbE, PsbF, PsbH, PsbI, PsbJ, PsbK, PsbL, PsbM, PsbT, PsbX, PsbY, PsbZ, Psb30/Ycf12, at least 3 peripheral proteins of the oxygen-evolving complex and a large number of cofactors. It forms dimeric complexes. The D1/D2 heterodimer binds P680, chlorophylls that are the primary electron donor of PSII, and subsequent electron acceptors. It shares a non-heme iron and each subunit binds pheophytin, quinone, additional chlorophylls, carotenoids and lipids. D1 provides most of the ligands for the Mn4-Ca-O5 cluster of the oxygen-evolving complex (OEC). There is also a Cl(-1) ion associated with D1 and D2, which is required for oxygen evolution. The PSII complex binds additional chlorophylls, carotenoids and specific lipids. is required as a cofactor. In terms of processing, tyr-161 forms a radical intermediate that is referred to as redox-active TyrZ, YZ or Y-Z. C-terminally processed by CTPA; processing is essential to allow assembly of the oxygen-evolving complex and thus photosynthetic growth.

Its subcellular location is the plastid. The protein resides in the chloroplast thylakoid membrane. It catalyses the reaction 2 a plastoquinone + 4 hnu + 2 H2O = 2 a plastoquinol + O2. Photosystem II (PSII) is a light-driven water:plastoquinone oxidoreductase that uses light energy to abstract electrons from H(2)O, generating O(2) and a proton gradient subsequently used for ATP formation. It consists of a core antenna complex that captures photons, and an electron transfer chain that converts photonic excitation into a charge separation. The D1/D2 (PsbA/PsbD) reaction center heterodimer binds P680, the primary electron donor of PSII as well as several subsequent electron acceptors. The chain is Photosystem II protein D1 from Emiliania huxleyi (Coccolithophore).